We begin with the raw amino-acid sequence, 730 residues long: Protein folded gastrulation (730 aa).

A signal peptide spans 1–21 (MSPPNCLLAVLALTVFIGANN). N-linked (GlcNAc...) asparagine glycosylation is found at N51 and N193. Low complexity predominate over residues 197 to 211 (TPETSTSITPTSTTT). Positions 197 to 222 (TPETSTSITPTSTTTFAVPSVPSGEA) are disordered. 2 N-linked (GlcNAc...) asparagine glycosylation sites follow: N252 and N289. Residues 361-385 (ELEEEVGEEEVTATDILPSEEDEYT) show a composition bias toward acidic residues. The tract at residues 361–424 (ELEEEVGEEE…SPHPPEEPEI (64 aa)) is disordered. Positions 386 to 415 (TETATTTGDTTVAEASMDTSTATSTSGQSS) are enriched in low complexity. N459 carries an N-linked (GlcNAc...) asparagine glycan. 2 disordered regions span residues 474–526 (EDES…GGHK) and 545–583 (KGKQ…TTTT). A compositionally biased stretch (low complexity) spans 478 to 491 (STTTATPEPSSSTP). The span at 504–513 (DNDNLMTNTI) shows a compositional bias: polar residues. Over residues 567–583 (TSALTSTSTEDATTTTT) the composition is skewed to low complexity. N-linked (GlcNAc...) asparagine glycosylation is found at N590 and N639. Residues 663-676 (SAASTESAGTAATT) are compositionally biased toward low complexity. Residues 663-683 (SAASTESAGTAATTPNSSSNP) are disordered. An N-linked (GlcNAc...) asparagine glycan is attached at N678.

Post-translationally, may be highly O-glycosylated in its Ser/Thr-rich C-terminal part. Expressed in the invagination primordia in a pattern that precisely precedes the pattern of constrictions.

The protein resides in the secreted. It is found in the extracellular space. The protein localises to the extracellular matrix. Functionally, coordinates cell shape changes during formation of the ventral furrow and invagination of the posterior midgut primordium, by inducing apical constriction of cells in spatially and temporally defined manners. Could function as a secreted signal to initiate apical constriction by acting as a ligand for an unidentified G protein-coupled receptor, which in turn activates the G protein alpha subunit encoded by concertina, in neighboring cells. Such an intracellular pathway would ultimately induce contraction of the apical actin-myosin network. In the ventral furrow, fog appears to ensure that all the cells initiate constriction within several minutes of each other. In the posterior midgut invagination, fog appears to direct the ordered progression of constriction initiations out from a central region and also to delimit the peripheral extent of this spreading. The sequence is that of Protein folded gastrulation (fog) from Drosophila melanogaster (Fruit fly).